A 562-amino-acid polypeptide reads, in one-letter code: Lamassu protein LmuB (562 aa).

Its function is as follows. Component of antiviral defense system Lamassu type I, composed of LmuA and LmuB. Expression of Lamassu type I in B.subtilis (strain BEST7003) confers resistance to phages phi3T, SpBeta and SPR. May be an ATPase. The chain is Lamassu protein LmuB from Bacillus sp. (strain NCIM 5461 / CCTCC AB 2011126 / NIO-1130).